The chain runs to 370 residues: Erythronate-4-phosphate dehydrogenase (370 aa).

Substrate contacts are provided by S45 and T66. Residues D142 and T169 each contribute to the NAD(+) site. The active site involves R202. D228 provides a ligand contact to NAD(+). E233 is an active-site residue. H250 (proton donor) is an active-site residue. G253 lines the NAD(+) pocket. Y254 contacts substrate.

This sequence belongs to the D-isomer specific 2-hydroxyacid dehydrogenase family. PdxB subfamily. As to quaternary structure, homodimer.

The protein resides in the cytoplasm. The catalysed reaction is 4-phospho-D-erythronate + NAD(+) = (R)-3-hydroxy-2-oxo-4-phosphooxybutanoate + NADH + H(+). Its pathway is cofactor biosynthesis; pyridoxine 5'-phosphate biosynthesis; pyridoxine 5'-phosphate from D-erythrose 4-phosphate: step 2/5. Catalyzes the oxidation of erythronate-4-phosphate to 3-hydroxy-2-oxo-4-phosphonooxybutanoate. The sequence is that of Erythronate-4-phosphate dehydrogenase from Teredinibacter turnerae (strain ATCC 39867 / T7901).